Reading from the N-terminus, the 757-residue chain is Serine/threonine-protein phosphatase with EF-hands 2 (757 aa).

The 26-residue stretch at 21-46 (KAAALIQRWYRRYMARLEMRRRCTWN) folds into the IQ domain. Residues 128-544 (ATALVEAFRL…PHIVQYQANK (417 aa)) form a catalytic region. D179, H181, D208, and N240 together coordinate Mn(2+). Residue H241 is the Proton donor of the active site. Residue H292 participates in Mn(2+) binding. The interval 318–349 (CKTRKESENREEQKRKDNQTSSGQKPTPWFLP) is disordered. Positions 321 to 335 (RKESENREEQKRKDN) are enriched in basic and acidic residues. H492 serves as a coordination point for Mn(2+). EF-hand domains are found at residues 572-607 (AHSS…VLHL), 656-691 (RNRS…FSSH), and 696-731 (ITDD…VEQS). Positions 585, 587, 589, 596, 669, 671, 673, 680, 709, 711, 713, 715, and 720 each coordinate Ca(2+).

Belongs to the PPP phosphatase family. Requires Mn(2+) as cofactor. Detected in retina, more specifically in photoreceptors.

It catalyses the reaction O-phospho-L-seryl-[protein] + H2O = L-seryl-[protein] + phosphate. The enzyme catalyses O-phospho-L-threonyl-[protein] + H2O = L-threonyl-[protein] + phosphate. With respect to regulation, activated by calcium. Functionally, may play a role in phototransduction. May dephosphorylate photoactivated rhodopsin. May function as a calcium sensing regulator of ionic currents, energy production or synaptic transmission. The chain is Serine/threonine-protein phosphatase with EF-hands 2 (Ppef2) from Mus musculus (Mouse).